Reading from the N-terminus, the 133-residue chain is MATNFLVGEKIWFHKFKYGDAERRFYEQMNGPVAGASLQEASMILHDIARARENIPKSLAGSLGPGASSGPSGDHSELVVRIASLEVDNQRDLAERAGEELARPLGHSPADPAHVSHAPSGAPGQEASHTSRG.

Low complexity predominate over residues 58 to 73 (SLAGSLGPGASSGPSG). Disordered regions lie at residues 58–77 (SLAGSLGPGASSGPSGDHSE) and 89–133 (NQRD…TSRG). Basic and acidic residues predominate over residues 89-102 (NQRDLAERAGEELA).

Belongs to the EF-1-beta/EF-1-delta family.

The protein is Putative elongation factor 1-delta-like protein (EEF1DP3) of Homo sapiens (Human).